We begin with the raw amino-acid sequence, 138 residues long: Venom allergen 2 (138 aa).

The signal sequence occupies residues methionine 1 to alanine 19. Disulfide bonds link cysteine 34-cysteine 57, cysteine 81-cysteine 94, and cysteine 101-cysteine 122.

The protein belongs to the ant venom allergen 2/4 family. In terms of assembly, homodimer; disulfide-linked. As to expression, expressed by the venom gland.

It localises to the secreted. In Solenopsis invicta (Red imported fire ant), this protein is Venom allergen 2.